A 325-amino-acid polypeptide reads, in one-letter code: Methionyl-tRNA formyltransferase (325 aa).

Residue 113 to 116 (SLLP) participates in (6S)-5,6,7,8-tetrahydrofolate binding.

It belongs to the Fmt family.

It catalyses the reaction L-methionyl-tRNA(fMet) + (6R)-10-formyltetrahydrofolate = N-formyl-L-methionyl-tRNA(fMet) + (6S)-5,6,7,8-tetrahydrofolate + H(+). Attaches a formyl group to the free amino group of methionyl-tRNA(fMet). The formyl group appears to play a dual role in the initiator identity of N-formylmethionyl-tRNA by promoting its recognition by IF2 and preventing the misappropriation of this tRNA by the elongation apparatus. This Chromohalobacter salexigens (strain ATCC BAA-138 / DSM 3043 / CIP 106854 / NCIMB 13768 / 1H11) protein is Methionyl-tRNA formyltransferase.